A 120-amino-acid chain; its full sequence is MRNVYDIAYELANALKESNEFKRFKAAKEKIEKDEKLKQMVMDFKKKQLELEQKRLQGQEVTSSDVYSLQQLYQIISLNPDIEEYLSSEMMLAKILADISKIIAEAVDLKDEMFGLLESK.

Belongs to the UPF0342 family.

This Caldicellulosiruptor saccharolyticus (strain ATCC 43494 / DSM 8903 / Tp8T 6331) protein is UPF0342 protein Csac_0863.